A 281-amino-acid polypeptide reads, in one-letter code: Diaminopimelate epimerase (281 aa).

2 residues coordinate substrate: Asn13 and Asn66. Cys75 (proton donor) is an active-site residue. Substrate is bound by residues 76–77 (GN), Asn164, Asn197, and 215–216 (ER). Cys224 serves as the catalytic Proton acceptor. 225–226 (GT) lines the substrate pocket.

This sequence belongs to the diaminopimelate epimerase family. As to quaternary structure, homodimer.

Its subcellular location is the cytoplasm. It catalyses the reaction (2S,6S)-2,6-diaminopimelate = meso-2,6-diaminopimelate. It participates in amino-acid biosynthesis; L-lysine biosynthesis via DAP pathway; DL-2,6-diaminopimelate from LL-2,6-diaminopimelate: step 1/1. Catalyzes the stereoinversion of LL-2,6-diaminopimelate (L,L-DAP) to meso-diaminopimelate (meso-DAP), a precursor of L-lysine and an essential component of the bacterial peptidoglycan. This Picosynechococcus sp. (strain ATCC 27264 / PCC 7002 / PR-6) (Agmenellum quadruplicatum) protein is Diaminopimelate epimerase.